Consider the following 354-residue polypeptide: Serine/threonine-protein kinase ppk34 (354 aa).

In terms of domain architecture, Protein kinase spans 40–331 (YRLKNMLGYG…IEELLRDPFL (292 aa)). ATP contacts are provided by residues 46 to 54 (LGYGACSTV) and lysine 69. Catalysis depends on aspartate 200, which acts as the Proton acceptor.

This sequence belongs to the protein kinase superfamily. Ser/Thr protein kinase family.

The protein localises to the cytoplasm. It localises to the nucleus. The enzyme catalyses L-seryl-[protein] + ATP = O-phospho-L-seryl-[protein] + ADP + H(+). It catalyses the reaction L-threonyl-[protein] + ATP = O-phospho-L-threonyl-[protein] + ADP + H(+). The protein is Serine/threonine-protein kinase ppk34 (ppk34) of Schizosaccharomyces pombe (strain 972 / ATCC 24843) (Fission yeast).